We begin with the raw amino-acid sequence, 290 residues long: GTPase Era (290 aa).

The 168-residue stretch at 2-169 (KSGFAAILGR…KNKIYENFSE (168 aa)) folds into the Era-type G domain. The segment at 10-17 (GRPSTGKS) is G1. 10 to 17 (GRPSTGKS) provides a ligand contact to GTP. The interval 36-40 (QTTRN) is G2. The G3 stretch occupies residues 57 to 60 (DTPG). GTP-binding positions include 57–61 (DTPGF) and 119–122 (NKVD). The tract at residues 119 to 122 (NKVD) is G4. The tract at residues 148-150 (ISA) is G5. Residues 200-276 (LKEELPYSLY…NLFLQVKLKK (77 aa)) form the KH type-2 domain.

The protein belongs to the TRAFAC class TrmE-Era-EngA-EngB-Septin-like GTPase superfamily. Era GTPase family. Monomer.

The protein localises to the cytoplasm. It localises to the cell inner membrane. An essential GTPase that binds both GDP and GTP, with rapid nucleotide exchange. Plays a role in 16S rRNA processing and 30S ribosomal subunit biogenesis and possibly also in cell cycle regulation and energy metabolism. This chain is GTPase Era, found in Borreliella afzelii (strain PKo) (Borrelia afzelii).